Here is a 379-residue protein sequence, read N- to C-terminus: Chaperone protein DnaJ (379 aa).

A J domain is found at 5–70 (DYYEILEVSR…EKRAAYDRYG (66 aa)). The segment at 135 to 213 (GIKVPISYVT…CGGSGRVRNE (79 aa)) adopts a CR-type zinc-finger fold. Residues cysteine 148, cysteine 151, cysteine 165, cysteine 168, cysteine 187, cysteine 190, cysteine 201, and cysteine 204 each contribute to the Zn(2+) site. 4 CXXCXGXG motif repeats span residues 148 to 155 (CSSCSGIG), 165 to 172 (CGNCNGAG), 187 to 194 (CNVCNGEG), and 201 to 208 (CRRCGGSG).

This sequence belongs to the DnaJ family. As to quaternary structure, homodimer. It depends on Zn(2+) as a cofactor.

The protein localises to the cytoplasm. Functionally, participates actively in the response to hyperosmotic and heat shock by preventing the aggregation of stress-denatured proteins and by disaggregating proteins, also in an autonomous, DnaK-independent fashion. Unfolded proteins bind initially to DnaJ; upon interaction with the DnaJ-bound protein, DnaK hydrolyzes its bound ATP, resulting in the formation of a stable complex. GrpE releases ADP from DnaK; ATP binding to DnaK triggers the release of the substrate protein, thus completing the reaction cycle. Several rounds of ATP-dependent interactions between DnaJ, DnaK and GrpE are required for fully efficient folding. Also involved, together with DnaK and GrpE, in the DNA replication of plasmids through activation of initiation proteins. The chain is Chaperone protein DnaJ from Anaplasma marginale (strain Florida).